We begin with the raw amino-acid sequence, 528 residues long: Peptide chain release factor 3 (528 aa).

Positions 10-278 (DKRRTFGIIS…TFVDLAPAPQ (269 aa)) constitute a tr-type G domain. Residues 19 to 26 (SHPDAGKT), 87 to 91 (DTPGH), and 141 to 144 (NKLD) each bind GTP.

This sequence belongs to the TRAFAC class translation factor GTPase superfamily. Classic translation factor GTPase family. PrfC subfamily.

It is found in the cytoplasm. In terms of biological role, increases the formation of ribosomal termination complexes and stimulates activities of RF-1 and RF-2. It binds guanine nucleotides and has strong preference for UGA stop codons. It may interact directly with the ribosome. The stimulation of RF-1 and RF-2 is significantly reduced by GTP and GDP, but not by GMP. The protein is Peptide chain release factor 3 of Oleidesulfovibrio alaskensis (strain ATCC BAA-1058 / DSM 17464 / G20) (Desulfovibrio alaskensis).